Reading from the N-terminus, the 278-residue chain is MATH domain and coiled-coil domain-containing protein At1g31400 (278 aa).

One can recognise an MATH domain in the interval 6–131 (EKRITWTIKN…SGQVKIVAEV (126 aa)). A coiled-coil region spans residues 232 to 267 (KLDWLEKKLKEVGKTRMQQLEQNLKDLKESLCWSSD).

This is MATH domain and coiled-coil domain-containing protein At1g31400 from Arabidopsis thaliana (Mouse-ear cress).